A 284-amino-acid chain; its full sequence is Tropomyosin, smooth muscle/fibroblast CTM1 (284 aa).

A coiled-coil region spans residues 1-284 (MEAIKKKMTM…DVTLQGIGDL (284 aa)). Residues 18 to 38 (AIDRAEQAETDKKSAEDKATG) are disordered.

Belongs to the tropomyosin family. As to quaternary structure, homodimer. In terms of tissue distribution, predominantly expressed in body wall muscle and heart, low in intestine, ovary and larval tail muscle.

In terms of biological role, the function of tropomyosin in smooth muscle and non-muscle cells is not clear. This Ciona intestinalis (Transparent sea squirt) protein is Tropomyosin, smooth muscle/fibroblast CTM1 (CTM1).